Here is a 448-residue protein sequence, read N- to C-terminus: MTTILKHLPVGQRIGIAFSGGLDTSAALLWMRQKGAVPYAYTANLGQPDEDDYEEIPRRAMEYGAENARLIDCRKQLVAEGIAAIQCGAFHNTTAGVTYFNTTPLGRAVTGTMLVAAMKEDGVNIWGDGSTYKGNDIERFYRYGLLTNAELKIYKPWLDTDFIDELGGRQEMSEFMSQAGFGYKMSAEKAYSTDSNILGATHEAKDLEFLNSSVKIVNPIMGVKFWDENVKVPAEEVTIRFERGHPVALNGKTFADDVELMLEANRIGGRHGLGMSDQIENRIIEAKSRGIYEAPGMALLHIAYERLVTGIHNEDTIEQYHANGRQLGRFLYQGRWFDSQALMLRDASQRWIASAITGEVTLELRRGNDYSIMNTVSDNLTYKPERLTMEKGDSVFSPDDRIGQLTMRNLDITDTREKLFNYVETGLLSSSASTGLPQVGQLQDKTEK.

Residues 17 to 25 (AFSGGLDTS) and Ala-43 each bind ATP. Position 99 (Tyr-99) interacts with L-citrulline. Positions 129 and 131 each coordinate ATP. 3 residues coordinate L-aspartate: Thr-131, Asn-135, and Asp-136. Asn-135 contributes to the L-citrulline binding site. ATP is bound at residue Asp-136. Arg-139 and Ser-192 together coordinate L-citrulline. Asp-194 serves as a coordination point for ATP. L-citrulline contacts are provided by Thr-201, Glu-203, and Glu-280.

It belongs to the argininosuccinate synthase family. Type 2 subfamily. Homotetramer.

It localises to the cytoplasm. It carries out the reaction L-citrulline + L-aspartate + ATP = 2-(N(omega)-L-arginino)succinate + AMP + diphosphate + H(+). It functions in the pathway amino-acid biosynthesis; L-arginine biosynthesis; L-arginine from L-ornithine and carbamoyl phosphate: step 2/3. This Pectobacterium carotovorum subsp. carotovorum (strain PC1) protein is Argininosuccinate synthase.